Consider the following 526-residue polypeptide: Peptide chain release factor 3 (526 aa).

In terms of domain architecture, tr-type G spans 9 to 277 (DKRRTFAIIS…GIVEWAPIPQ (269 aa)). Residues 18–25 (SHPDAGKT), 86–90 (DTPGH), and 140–143 (NKLD) each bind GTP.

The protein belongs to the TRAFAC class translation factor GTPase superfamily. Classic translation factor GTPase family. PrfC subfamily.

Its subcellular location is the cytoplasm. Increases the formation of ribosomal termination complexes and stimulates activities of RF-1 and RF-2. It binds guanine nucleotides and has strong preference for UGA stop codons. It may interact directly with the ribosome. The stimulation of RF-1 and RF-2 is significantly reduced by GTP and GDP, but not by GMP. This is Peptide chain release factor 3 from Shewanella halifaxensis (strain HAW-EB4).